The sequence spans 264 residues: Thiazole synthase (264 aa).

Catalysis depends on Lys-98, which acts as the Schiff-base intermediate with DXP. Residues Gly-159, 185–186, and 207–208 contribute to the 1-deoxy-D-xylulose 5-phosphate site; these read AG and AS.

Belongs to the ThiG family. Homotetramer. Forms heterodimers with either ThiH or ThiS.

The protein localises to the cytoplasm. It catalyses the reaction [ThiS sulfur-carrier protein]-C-terminal-Gly-aminoethanethioate + 2-iminoacetate + 1-deoxy-D-xylulose 5-phosphate = [ThiS sulfur-carrier protein]-C-terminal Gly-Gly + 2-[(2R,5Z)-2-carboxy-4-methylthiazol-5(2H)-ylidene]ethyl phosphate + 2 H2O + H(+). The protein operates within cofactor biosynthesis; thiamine diphosphate biosynthesis. Its function is as follows. Catalyzes the rearrangement of 1-deoxy-D-xylulose 5-phosphate (DXP) to produce the thiazole phosphate moiety of thiamine. Sulfur is provided by the thiocarboxylate moiety of the carrier protein ThiS. In vitro, sulfur can be provided by H(2)S. This chain is Thiazole synthase, found in Streptomyces griseus subsp. griseus (strain JCM 4626 / CBS 651.72 / NBRC 13350 / KCC S-0626 / ISP 5235).